Consider the following 287-residue polypeptide: Phospholipase A and acyltransferase 5 (287 aa).

Disordered stretches follow at residues 48–72 (PKQI…ASSQ) and 86–138 (DRGL…SNQK). 2 stretches are compositionally biased toward polar residues: residues 49-72 (KQIS…ASSQ) and 128-138 (LKNQAAESNQK). An LRAT domain is found at 144–257 (LIEIFRIGYE…LRYGVPRSQQ (114 aa)). Catalysis depends on residues His154 and His166. The active-site Acyl-thioester intermediate is the Cys241.

This sequence belongs to the H-rev107 family. Expressed in testis.

The protein resides in the cytoplasm. Its subcellular location is the cytosol. The catalysed reaction is a 1,2-diacyl-sn-glycero-3-phosphocholine + H2O = a 1-acyl-sn-glycero-3-phosphocholine + a fatty acid + H(+). It catalyses the reaction a 1,2-diacyl-sn-glycero-3-phosphocholine + H2O = a 2-acyl-sn-glycero-3-phosphocholine + a fatty acid + H(+). It carries out the reaction 1-hexadecanoyl-2-(5Z,8Z,11Z,14Z-eicosatetraenoyl)-sn-glycero-3-phosphocholine + 1,2-di-(9Z-octadecenoyl)-sn-glycero-3-phosphoethanolamine = N-(5Z,8Z,11Z,14Z-eicosatetraenoyl)-1,2-di-(9Z-octadecenoyl)-sn-glycero-3-phosphoethanolamine + 1-hexadecanoyl-sn-glycero-3-phosphocholine + H(+). The enzyme catalyses 1,2-di-(9Z-octadecenoyl)-sn-glycero-3-phosphoethanolamine + 1,2-dihexadecanoyl-sn-glycero-3-phosphocholine = N-hexadecanoyl-1,2-di-(9Z-octadecenoyl)-sn-glycero-3-phosphoethanolamine + 1-hexadecanoyl-sn-glycero-3-phosphocholine + H(+). The catalysed reaction is 1,2-di-(9Z-octadecenoyl)-sn-glycero-3-phosphoethanolamine + 1,2-dihexadecanoyl-sn-glycero-3-phosphocholine = N-hexadecanoyl-1,2-di-(9Z-octadecenoyl)-sn-glycero-3-phosphoethanolamine + 2-hexadecanoyl-sn-glycero-3-phosphocholine + H(+). It catalyses the reaction a 1,2-diacyl-sn-glycero-3-phosphoethanolamine + a 1,2-diacyl-sn-glycero-3-phosphocholine = an N-acyl-1,2-diacyl-sn-glycero-3-phosphoethanolamine + a 1-acyl-sn-glycero-3-phosphocholine + H(+). It carries out the reaction a 1,2-diacyl-sn-glycero-3-phosphoethanolamine + a 1,2-diacyl-sn-glycero-3-phosphocholine = an N-acyl-1,2-diacyl-sn-glycero-3-phosphoethanolamine + a 2-acyl-sn-glycero-3-phosphocholine + H(+). The enzyme catalyses 1-hexadecanoyl-2-(9Z-octadecenoyl)-sn-glycero-3-phosphocholine + 1,2-di-(9Z-octadecenoyl)-sn-glycero-3-phosphoethanolamine = N,1,2-tri-(9Z-octadecenoyl)-sn-glycero-3-phosphoethanolamine + 1-hexadecanoyl-sn-glycero-3-phosphocholine + H(+). Its function is as follows. Exhibits both phospholipase A1/2 and acyltransferase activities. Shows phospholipase A1 (PLA1) and A2 (PLA2) activity, catalyzing the calcium-independent release of fatty acids from the sn-1 or sn-2 position of glycerophospholipids. Shows N-acyltransferase activity, catalyzing the calcium-independent transfer of a fatty acyl group at the sn-1 position of phosphatidylcholine (PC) and other glycerophospholipids to the primary amine of phosphatidylethanolamine (PE), forming N-acylphosphatidylethanolamine (NAPE), which serves as precursor for N-acylethanolamines (NAEs). This chain is Phospholipase A and acyltransferase 5, found in Rattus norvegicus (Rat).